We begin with the raw amino-acid sequence, 172 residues long: uncharacterized protein (172 aa).

This is an uncharacterized protein from Aquifex aeolicus (strain VF5).